We begin with the raw amino-acid sequence, 452 residues long: Asparagine--tRNA ligase (452 aa).

The protein belongs to the class-II aminoacyl-tRNA synthetase family. Homodimer.

It is found in the cytoplasm. The enzyme catalyses tRNA(Asn) + L-asparagine + ATP = L-asparaginyl-tRNA(Asn) + AMP + diphosphate + H(+). The sequence is that of Asparagine--tRNA ligase from Mycoplasma mycoides subsp. mycoides SC (strain CCUG 32753 / NCTC 10114 / PG1).